The primary structure comprises 172 residues: Zinc finger protein 580 (172 aa).

The interval 1–92 (MLLLPPRPPH…PGEPGPRKGY (92 aa)) is disordered. Residues 19–30 (MDPPPPKTPPFP) are compositionally biased toward pro residues. Residue lysine 31 forms a Glycyl lysine isopeptide (Lys-Gly) (interchain with G-Cter in SUMO2) linkage. Residues 92-114 (YSCPECARVFASPLRLQSHRVSH) form a C2H2-type 1 zinc finger. Lysine 118 is covalently cross-linked (Glycyl lysine isopeptide (Lys-Gly) (interchain with G-Cter in SUMO2)). 2 consecutive C2H2-type zinc fingers follow at residues 120–142 (FTCG…RATH) and 150–172 (HTCP…VRLH).

Interacts with SMAD2.

Its subcellular location is the nucleus. Its function is as follows. Involved in the regulation of endothelial cell proliferation and migration. Mediates H(2)O(2)-induced leukocyte chemotaxis by elevating interleukin-8 production and may play a role in inflammation. May be involved in transcriptional regulation. The polypeptide is Zinc finger protein 580 (Znf580) (Mus musculus (Mouse)).